A 233-amino-acid polypeptide reads, in one-letter code: Demethylmenaquinone methyltransferase (233 aa).

S-adenosyl-L-methionine is bound by residues threonine 58, aspartate 79, and asparagine 106–alanine 107.

The protein belongs to the class I-like SAM-binding methyltransferase superfamily. MenG/UbiE family.

It catalyses the reaction a 2-demethylmenaquinol + S-adenosyl-L-methionine = a menaquinol + S-adenosyl-L-homocysteine + H(+). It functions in the pathway quinol/quinone metabolism; menaquinone biosynthesis; menaquinol from 1,4-dihydroxy-2-naphthoate: step 2/2. Functionally, methyltransferase required for the conversion of demethylmenaquinol (DMKH2) to menaquinol (MKH2). The chain is Demethylmenaquinone methyltransferase from Bacillus subtilis (strain 168).